A 146-amino-acid chain; its full sequence is 3-dehydroquinate dehydratase (146 aa).

Tyrosine 24 acts as the Proton acceptor in catalysis. Substrate-binding residues include asparagine 75, histidine 81, and aspartate 88. Histidine 101 acts as the Proton donor in catalysis. Residues leucine 102 to serine 103 and arginine 112 contribute to the substrate site.

The protein belongs to the type-II 3-dehydroquinase family. As to quaternary structure, homododecamer.

The enzyme catalyses 3-dehydroquinate = 3-dehydroshikimate + H2O. Its pathway is metabolic intermediate biosynthesis; chorismate biosynthesis; chorismate from D-erythrose 4-phosphate and phosphoenolpyruvate: step 3/7. In terms of biological role, catalyzes a trans-dehydration via an enolate intermediate. This is 3-dehydroquinate dehydratase from Maricaulis maris (strain MCS10) (Caulobacter maris).